The chain runs to 474 residues: UDP glycosyltransferase 9 (474 aa).

UDP-alpha-D-glucose-binding positions include Ser-296, 349–350 (WC), 367–375 (HCGWNSTLE), and 389–392 (WADQ).

The protein belongs to the UDP-glycosyltransferase family.

This chain is UDP glycosyltransferase 9, found in Catharanthus roseus (Madagascar periwinkle).